The chain runs to 147 residues: Large ribosomal subunit protein uL13 (147 aa).

The protein belongs to the universal ribosomal protein uL13 family. Part of the 50S ribosomal subunit.

In terms of biological role, this protein is one of the early assembly proteins of the 50S ribosomal subunit, although it is not seen to bind rRNA by itself. It is important during the early stages of 50S assembly. The polypeptide is Large ribosomal subunit protein uL13 (Lactobacillus johnsonii (strain CNCM I-12250 / La1 / NCC 533)).